The chain runs to 200 residues: Sperm acrosome developmental regulator (200 aa).

Ser63 carries the phosphoserine modification. A compositionally biased stretch (basic residues) spans 167–183 (QERRRRRRMRSHASHTS). Residues 167–200 (QERRRRRRMRSHASHTSRHSESVQGLKHDARSPL) form a disordered region. Basic and acidic residues predominate over residues 184-200 (RHSESVQGLKHDARSPL).

It localises to the cytoplasmic vesicle. The protein localises to the secretory vesicle. Its subcellular location is the acrosome. Its function is as follows. May play an important role in acrosome formation and nucleus shaping during spermiogenesis. This chain is Sperm acrosome developmental regulator (Spacdr), found in Rattus norvegicus (Rat).